A 197-amino-acid chain; its full sequence is Guanylate kinase (197 aa).

Positions 6–191 (SKLIILSGPS…CVAQIEKIIS (186 aa)) constitute a Guanylate kinase-like domain. Residue 13–20 (GPSGVGKG) participates in ATP binding.

The protein belongs to the guanylate kinase family.

The protein resides in the cytoplasm. It carries out the reaction GMP + ATP = GDP + ADP. In terms of biological role, essential for recycling GMP and indirectly, cGMP. The sequence is that of Guanylate kinase from Mesomycoplasma hyopneumoniae (strain 7448) (Mycoplasma hyopneumoniae).